The chain runs to 173 residues: Crossover junction endodeoxyribonuclease RuvC (173 aa).

Residues Asp8, Glu67, and Asp139 contribute to the active site. Asp8, Glu67, and Asp139 together coordinate Mg(2+).

It belongs to the RuvC family. As to quaternary structure, homodimer which binds Holliday junction (HJ) DNA. The HJ becomes 2-fold symmetrical on binding to RuvC with unstacked arms; it has a different conformation from HJ DNA in complex with RuvA. In the full resolvosome a probable DNA-RuvA(4)-RuvB(12)-RuvC(2) complex forms which resolves the HJ. It depends on Mg(2+) as a cofactor.

The protein localises to the cytoplasm. The catalysed reaction is Endonucleolytic cleavage at a junction such as a reciprocal single-stranded crossover between two homologous DNA duplexes (Holliday junction).. Functionally, the RuvA-RuvB-RuvC complex processes Holliday junction (HJ) DNA during genetic recombination and DNA repair. Endonuclease that resolves HJ intermediates. Cleaves cruciform DNA by making single-stranded nicks across the HJ at symmetrical positions within the homologous arms, yielding a 5'-phosphate and a 3'-hydroxyl group; requires a central core of homology in the junction. The consensus cleavage sequence is 5'-(A/T)TT(C/G)-3'. Cleavage occurs on the 3'-side of the TT dinucleotide at the point of strand exchange. HJ branch migration catalyzed by RuvA-RuvB allows RuvC to scan DNA until it finds its consensus sequence, where it cleaves and resolves the cruciform DNA. The sequence is that of Crossover junction endodeoxyribonuclease RuvC from Shigella flexneri serotype 5b (strain 8401).